The chain runs to 1138 residues: MSRRFTVTSLPPAASAASADPESRRHSVADPRRLPREDVKGDGNPKESSPFINSTDTEKGREYDGRNMALFEEEMDTSPMVSSLLSGLANYTNLPQGSREHEEAENNEGGKKKPVQAPRMGTFMGVYLPCLQNIFGVILFLRLTWVVGIAGIMESFCMVFICCSCTMLTAISMSAIATNGVVPAGGSYYMISRSLGPEFGGAVGLCFYLGTTFAGAMYILGTIEILLAYLFPAMAIFKAEDASGEAAAMLNNMRVYGTCVLTCMATVVFVGVKYVNKFALVFLGCVILSILAIYAGVIKSAFDPPNFPICLLGNRTLSRHGFDVCAKLAWEGNETVTTRLWGLFCSSRLLNATCDEYFTRNNVTEIQGIPGAASGLIKENLWSSYLTKGVIVERRGMPSVGLADGTPVDMDHPYVFSDMTSYFTLLVGIYFPSVTGIMAGSNRSGDLRDAQKSIPTGTILAIATTSAVYISSVVLFGACIEGVVLRDKFGEAVNGNLVVGTLAWPSPWVIVIGSFFSTCGAGLQSLTGAPRLLQAISRDGIVPFLQVFGHGKANGEPTWALLLTACICEIGILIASLDEVAPILSMFFLMCYMFVNLACAVQTLLRTPNWRPRFRYYHWTLSFLGMSLCLALMFICSWYYALVAMLIAGLIYKYIEYRGAEKEWGDGIRGLSLSAARYALLRLEEGPPHTKNWRPQLLVLVRVDQDQNVVHPQLLSLTSQLKAGKGLTIVGSVLEGTFLDNHPQAQRAEESIRRLMEAEKVKGFCQVVISSNLRDGVSHLIQSGGLGGLQHNTVLVGWPRNWRQKEDHQTWRNFIELVRETTAGHLALLVTKNVSMFPGNPERFSEGSIDVWWIVHDGGMLMLLPFLLRHHKVWRKCKMRIFTVAQMDDNSIQMKKDLTTFLYHLRITAEVEVVEMHESDISAYTYEKTLVMEQRSQILKQMHLTKNEREREIQSITDESRGSIRRKNPANPRLRLNVPEETACDNEEKPEEEVQLIHDQSAPSCPSSSPSPGEEPEGERETDPEVHLTWTKDKSVAEKNKGPSPVSSEGIKDFFSMKPEWENLNQSNVRRMHTAVRLNEVIVNKSRDAKLVLLNMPGPPRNRNGDENYMEFLEVLTEQLDRVMLVRGGGREVITIYS.

Disordered stretches follow at residues Met1–Glu62 and Gln96–Gln116. The Cytoplasmic segment spans residues Met1–Ser98. A compositionally biased stretch (basic and acidic residues) spans Pro21–Pro45. A compositionally biased stretch (polar residues) spans Lys46–Thr55. At Thr57 the chain carries Phosphothreonine. A compositionally biased stretch (basic and acidic residues) spans Ser98–Lys111. Residues Arg99–Met120 traverse the membrane as a discontinuously helical segment. Lys113 serves as a coordination point for K(+). Topologically, residues Gly121–Pro129 are extracellular. The helical transmembrane segment at Cys130–Gly151 threads the bilayer. Topologically, residues Ile152–Ser174 are cytoplasmic. A helical transmembrane segment spans residues Ala175–Val203. Position 184 (Ala184) interacts with chloride. Topologically, residues Gly204–Tyr229 are extracellular. The next 2 membrane-spanning stretches (helical) occupy residues Leu230–Leu250 and Asn251–Asn276. Residues Lys277–Leu402 are Extracellular-facing. Cys310 and Cys325 are joined by a disulfide. 4 N-linked (GlcNAc...) asparagine glycosylation sites follow: Asn314, Asn333, Asn351, and Asn362. Cys345 and Cys354 are oxidised to a cystine. The helical transmembrane segment at Ala403–Thr420 threads the bilayer. Met410 contributes to the K(+) binding site. Positions 414 and 415 each coordinate chloride. Topologically, residues Ser421 to Ile429 are cytoplasmic. Residues Tyr430 to Ser453 traverse the membrane as a helical segment. A K(+)-binding site is contributed by Asp446. Residues Ile454–Leu485 lie on the Extracellular side of the membrane. Residues Arg486 to Gly513 traverse the membrane as a helical segment. The Cytoplasmic segment spans residues Ser514–Gln534. Helical transmembrane passes span Ala535–Gly555 and Glu556–Asp578. Position 569 (Glu569) interacts with chloride. Over Glu579 to Tyr592 the chain is Cytoplasmic. 2 helical membrane-spanning segments follow: residues Met593–Arg615 and Tyr616–Leu632. Over Met633–Ser1138 the chain is Cytoplasmic. The segment at Gly667 to Leu681 is scissor helix. The residue at position 929 (Thr929) is a Phosphothreonine; by OXSR1 and STK39. The tract at residues His943–Ile1051 is disordered. Basic and acidic residues predominate over residues Thr945–Gly962. Positions Thr982–Val994 are enriched in acidic residues. Positions Ser1001–Pro1012 are enriched in low complexity. The segment covering Glu1019–Lys1041 has biased composition (basic and acidic residues). A Phosphothreonine; by OXSR1 and STK39 modification is found at Thr1029. Phosphoserine is present on residues Ser1044, Ser1047, and Ser1048.

Belongs to the SLC12A transporter family. K/Cl co-transporter subfamily. As to quaternary structure, homodimer; adopts a domain-swap conformation at the scissor helices connecting the transmembrane domain and C-terminal domain. Heterodimer with K-Cl cotransporters SLC12A6 and SLC12A7. Interacts with AP2A1. Phosphorylated at Thr-929 and Thr-1029 by OXSR1/OSR1 and STK39/SPAK downstream of WNK kinases (WNK1, WNK2, WNK3 or WNK4), inhibiting the potassium-chloride cotransport activity. As to expression, expressed in brainstem, spinal cord and olfactory bulb of 17 dpc embryos. Expressed in all parts of the brain and spinal cord in postnatal day 14 mice. Expressed in brainstem and spinal cord of 17 dpc embryos. Expressed in all parts of the brain and spinal cord in postnatal day 14 mice.

It is found in the cell membrane. The protein resides in the cell projection. Its subcellular location is the dendrite. It carries out the reaction K(+)(in) + chloride(in) = K(+)(out) + chloride(out). Its activity is regulated as follows. Inhibited following phosphorylation by OXSR1/OSR1 and STK39/SPAK: phosphorylation takes place downstream of WNK kinases (WNK1, WNK2, WNK3 or WNK4) in response to hyperosmotic stress and subsequent cell shrinkage. Mediates electroneutral potassium-chloride cotransport in mature neurons and is required for neuronal Cl(-) homeostasis. As major extruder of intracellular chloride, it establishes the low neuronal Cl(-) levels required for chloride influx after binding of GABA-A and glycine to their receptors, with subsequent hyperpolarization and neuronal inhibition. Involved in the regulation of dendritic spine formation and maturation. The polypeptide is Solute carrier family 12 member 5 (Slc12a5) (Mus musculus (Mouse)).